A 215-amino-acid polypeptide reads, in one-letter code: MCRINFTTLSLILVLWSGSLMSEPSQNADGSIKGLYEYLLQREYAAPVSYADHQIKRKAVRSPSLRLRFGRRSDPSVPVEPEDDDMVDQRSIRAPQLRLRFGRTDPLWSSFNENALLEEKRAPSQRLRWGRSGGGMFSTNDVMQQKAIRAPQLRLRFGRSDPSWAMFNEHQLDEQQFADATRQPSKTLRGDEPTSIESTEQVESEENSPSNMDEK.

Residues 1–22 form the signal peptide; the sequence is MCRINFTTLSLILVLWSGSLMS. The propeptide occupies 23-56; that stretch reads EPSQNADGSIKGLYEYLLQREYAAPVSYADHQIK. Residues Phe-69 and Phe-101 each carry the phenylalanine amide modification. The residue at position 129 (Trp-129) is a Tryptophan amide. The residue at position 157 (Phe-157) is a Phenylalanine amide. The propeptide occupies 160–215; that stretch reads SDPSWAMFNEHQLDEQQFADATRQPSKTLRGDEPTSIESTEQVESEENSPSNMDEK. Positions 173–215 are disordered; the sequence is DEQQFADATRQPSKTLRGDEPTSIESTEQVESEENSPSNMDEK.

It belongs to the NPY family.

The protein localises to the secreted. Plays a role in controlling food intake and regulating body size. The sequence is that of Short neuropeptide F from Aedes aegypti (Yellowfever mosquito).